Consider the following 553-residue polypeptide: Solute carrier family 22 member 12 (553 aa).

A helical membrane pass occupies residues 9 to 29; it reads LVGGLGRFQVLQTMALMVSIM. 2 N-linked (GlcNAc...) asparagine glycosylation sites follow: asparagine 56 and asparagine 102. Helical transmembrane passes span 146-166, 174-194, 195-215, 232-252, 260-280, 351-371, 378-398, 407-427, 435-455, 466-486, and 495-515; these read PMAQ…CGPA, LVLT…AFAP, AFPV…GVMM, LVMT…AAVA, LLQL…WWLA, CIST…ALDL, IFLL…GALL, PTLA…TLVP, SALA…ITIY, MTAV…GPLV, and WLPL…ALLL. Threonine 542 is subject to Phosphothreonine.

Belongs to the major facilitator (TC 2.A.1) superfamily. Organic cation transporter (TC 2.A.1.19) family. Interacts with PDZK1. N-glycosylated. In terms of tissue distribution, detected in kidney (at protein level). Detected in fetal and adult kidney. Detected in epithelial cells of proximal tubules in renal cortex.

It is found in the apical cell membrane. The catalysed reaction is urate(out) + (S)-lactate(in) = urate(in) + (S)-lactate(out). The enzyme catalyses nicotinate(in) + urate(out) = nicotinate(out) + urate(in). It carries out the reaction urate(out) + n chloride(in) = urate(in) + n chloride(out). It catalyses the reaction orotate(out) + nicotinate(in) = orotate(in) + nicotinate(out). Its function is as follows. Electroneutral antiporter that translocates urate across the apical membrane of proximal tubular cells in exchange for monovalent organic or inorganic anions. Involved in renal reabsorption of urate and helps maintaining blood levels of uric acid. Mediates urate uptake by an exchange with organic anions such as (S)-lactate and nicotinate, and inorganic anion Cl(-). Other inorganic anions such as Br(-), I(-) and NO3(-) may also act as counteranions that exchange for urate. Also mediates orotate tubular uptake coupled with nicotinate efflux and to a lesser extent with lactate efflux, therefore displaying a potential role in orotate renal reabsorption. Orotate transport is Cl(-)-dependent. In Homo sapiens (Human), this protein is Solute carrier family 22 member 12.